A 339-amino-acid polypeptide reads, in one-letter code: Caspase drICE (339 aa).

The propeptide occupies 1–28; it reads MDATNNGESADQVGIRVGNPEQPNDHTD. A disordered region spans residues 1-45; the sequence is MDATNNGESADQVGIRVGNPEQPNDHTDALGSVGSGGAGSSGLVA. Catalysis depends on residues His-169 and Cys-211. A propeptide spanning residues 218 to 230 is cleaved from the precursor; it reads GGVTMQRSQTETD.

This sequence belongs to the peptidase C14A family. In terms of assembly, heterotetramer that consists of two anti-parallel arranged heterodimers, each one formed by a 21 kDa (p21) and a 12 kDa (p12) subunit. Inactive pro-form can homodimerize. Dronc and Drice can form a stable complex. Interacts with Diap2 (via BIR3 domain) to form a stable complex. May interact with some isoforms of Dark.

Zymogen activated by proteolytic cleavage; cleaved by the initiator caspase Dronc upon apoptosis induction. Involved in the activation cascade of caspases responsible for apoptosis execution. Acts downstream of rpr. Cleaves baculovirus p35 and lamin DmO in vitro. The chain is Caspase drICE (Drice) from Drosophila melanogaster (Fruit fly).